The chain runs to 445 residues: Phosphoglucosamine mutase (445 aa).

Catalysis depends on S102, which acts as the Phosphoserine intermediate. Residues S102, D241, D243, and D245 each contribute to the Mg(2+) site. Position 102 is a phosphoserine (S102).

This sequence belongs to the phosphohexose mutase family. Mg(2+) is required as a cofactor. Post-translationally, activated by phosphorylation.

The catalysed reaction is alpha-D-glucosamine 1-phosphate = D-glucosamine 6-phosphate. Catalyzes the conversion of glucosamine-6-phosphate to glucosamine-1-phosphate. This is Phosphoglucosamine mutase from Escherichia coli O7:K1 (strain IAI39 / ExPEC).